A 194-amino-acid chain; its full sequence is Imidazoleglycerol-phosphate dehydratase (194 aa).

The protein belongs to the imidazoleglycerol-phosphate dehydratase family.

The protein localises to the cytoplasm. The catalysed reaction is D-erythro-1-(imidazol-4-yl)glycerol 3-phosphate = 3-(imidazol-4-yl)-2-oxopropyl phosphate + H2O. The protein operates within amino-acid biosynthesis; L-histidine biosynthesis; L-histidine from 5-phospho-alpha-D-ribose 1-diphosphate: step 6/9. The polypeptide is Imidazoleglycerol-phosphate dehydratase (Listeria monocytogenes serovar 1/2a (strain ATCC BAA-679 / EGD-e)).